Reading from the N-terminus, the 144-residue chain is Large ribosomal subunit protein uL13 (144 aa).

Belongs to the universal ribosomal protein uL13 family. Part of the 50S ribosomal subunit.

Its function is as follows. This protein is one of the early assembly proteins of the 50S ribosomal subunit, although it is not seen to bind rRNA by itself. It is important during the early stages of 50S assembly. The protein is Large ribosomal subunit protein uL13 of Ruminiclostridium cellulolyticum (strain ATCC 35319 / DSM 5812 / JCM 6584 / H10) (Clostridium cellulolyticum).